We begin with the raw amino-acid sequence, 155 residues long: Ribosomal RNA large subunit methyltransferase H (155 aa).

S-adenosyl-L-methionine is bound by residues Leu-73, Gly-104, and 123–128 (LSPLTL).

The protein belongs to the RNA methyltransferase RlmH family. As to quaternary structure, homodimer.

It localises to the cytoplasm. The enzyme catalyses pseudouridine(1915) in 23S rRNA + S-adenosyl-L-methionine = N(3)-methylpseudouridine(1915) in 23S rRNA + S-adenosyl-L-homocysteine + H(+). Functionally, specifically methylates the pseudouridine at position 1915 (m3Psi1915) in 23S rRNA. In Pseudomonas syringae pv. tomato (strain ATCC BAA-871 / DC3000), this protein is Ribosomal RNA large subunit methyltransferase H.